The sequence spans 359 residues: Histidinol-phosphate aminotransferase (359 aa).

Residue Lys212 is modified to N6-(pyridoxal phosphate)lysine.

The protein belongs to the class-II pyridoxal-phosphate-dependent aminotransferase family. Histidinol-phosphate aminotransferase subfamily. As to quaternary structure, homodimer. Pyridoxal 5'-phosphate is required as a cofactor.

It carries out the reaction L-histidinol phosphate + 2-oxoglutarate = 3-(imidazol-4-yl)-2-oxopropyl phosphate + L-glutamate. It participates in amino-acid biosynthesis; L-histidine biosynthesis; L-histidine from 5-phospho-alpha-D-ribose 1-diphosphate: step 7/9. The sequence is that of Histidinol-phosphate aminotransferase from Buchnera aphidicola subsp. Melaphis rhois.